We begin with the raw amino-acid sequence, 568 residues long: Small ribosomal subunit protein bS1 (568 aa).

S1 motif domains are found at residues 39-100 (KTVV…LSRE), 118-184 (GEFV…VSRR), 205-273 (GMVL…LGIK), 290-360 (GKQM…LSIK), 377-447 (GTII…LGIK), and 464-533 (GTIV…LSVK).

Belongs to the bacterial ribosomal protein bS1 family.

Binds mRNA; thus facilitating recognition of the initiation point. It is needed to translate mRNA with a short Shine-Dalgarno (SD) purine-rich sequence. The chain is Small ribosomal subunit protein bS1 (rpsA) from Rickettsia conorii (strain ATCC VR-613 / Malish 7).